The chain runs to 229 residues: Large ribosomal subunit protein uL1 (229 aa).

This sequence belongs to the universal ribosomal protein uL1 family. Part of the 50S ribosomal subunit.

In terms of biological role, binds directly to 23S rRNA. The L1 stalk is quite mobile in the ribosome, and is involved in E site tRNA release. Functionally, protein L1 is also a translational repressor protein, it controls the translation of the L11 operon by binding to its mRNA. The polypeptide is Large ribosomal subunit protein uL1 (Actinobacillus succinogenes (strain ATCC 55618 / DSM 22257 / CCUG 43843 / 130Z)).